Reading from the N-terminus, the 365-residue chain is Heme A synthase (365 aa).

5 helical membrane-spanning segments follow: residues 23 to 43, 109 to 129, 137 to 157, 172 to 192, and 208 to 228; these read LLRI…LVGG, LLAR…WLTG, LPLV…WWMV, LATH…ILRG, and GFAA…ALVA. A heme-binding site is contributed by H272. A run of 3 helical transmembrane segments spans residues 274-294, 303-323, and 327-347; these read LGAY…ARAL, AVLF…TLLM, and IHVA…SVAH. Residue H333 coordinates heme.

Belongs to the COX15/CtaA family. Type 2 subfamily. Interacts with CtaB. Heme b is required as a cofactor.

The protein localises to the cell membrane. The catalysed reaction is Fe(II)-heme o + 2 A + H2O = Fe(II)-heme a + 2 AH2. It functions in the pathway porphyrin-containing compound metabolism; heme A biosynthesis; heme A from heme O: step 1/1. Catalyzes the conversion of heme O to heme A by two successive hydroxylations of the methyl group at C8. The first hydroxylation forms heme I, the second hydroxylation results in an unstable dihydroxymethyl group, which spontaneously dehydrates, resulting in the formyl group of heme A. This Agrobacterium fabrum (strain C58 / ATCC 33970) (Agrobacterium tumefaciens (strain C58)) protein is Heme A synthase.